The chain runs to 144 residues: Large ribosomal subunit protein uL11 (144 aa).

This sequence belongs to the universal ribosomal protein uL11 family. As to quaternary structure, part of the ribosomal stalk of the 50S ribosomal subunit. Interacts with L10 and the large rRNA to form the base of the stalk. L10 forms an elongated spine to which L12 dimers bind in a sequential fashion forming a multimeric L10(L12)X complex. Post-translationally, one or more lysine residues are methylated.

Its function is as follows. Forms part of the ribosomal stalk which helps the ribosome interact with GTP-bound translation factors. This chain is Large ribosomal subunit protein uL11, found in Neisseria gonorrhoeae (strain ATCC 700825 / FA 1090).